The following is an 896-amino-acid chain: Translation initiation factor IF-2 (896 aa).

Positions 93–219 (VKRDPQEAER…RMAEENEKNW (127 aa)) are enriched in basic and acidic residues. The segment at 93–307 (VKRDPQEAER…GSALQQGFQK (215 aa)) is disordered. Positions 256–271 (GRSRSSKAARPAKKGN) are enriched in basic residues. Positions 272–285 (KHAESKADREEARA) are enriched in basic and acidic residues. In terms of domain architecture, tr-type G spans 395-564 (PRAPVVTIMG…LLQAEVLELK (170 aa)). Residues 404-411 (GHVDHGKT) form a G1 region. 404–411 (GHVDHGKT) contributes to the GTP binding site. Residues 429–433 (GITQH) form a G2 region. A G3 region spans residues 450–453 (DTPG). GTP is bound by residues 450-454 (DTPGH) and 504-507 (NKID). The interval 504 to 507 (NKID) is G4. The interval 540–542 (SAK) is G5.

Belongs to the TRAFAC class translation factor GTPase superfamily. Classic translation factor GTPase family. IF-2 subfamily.

The protein resides in the cytoplasm. Functionally, one of the essential components for the initiation of protein synthesis. Protects formylmethionyl-tRNA from spontaneous hydrolysis and promotes its binding to the 30S ribosomal subunits. Also involved in the hydrolysis of GTP during the formation of the 70S ribosomal complex. The sequence is that of Translation initiation factor IF-2 from Klebsiella pneumoniae subsp. pneumoniae (strain ATCC 700721 / MGH 78578).